Reading from the N-terminus, the 171-residue chain is S-ribosylhomocysteine lyase (171 aa).

Positions 54, 58, and 128 each coordinate Fe cation.

This sequence belongs to the LuxS family. As to quaternary structure, homodimer. Requires Fe cation as cofactor.

The catalysed reaction is S-(5-deoxy-D-ribos-5-yl)-L-homocysteine = (S)-4,5-dihydroxypentane-2,3-dione + L-homocysteine. In terms of biological role, involved in the synthesis of autoinducer 2 (AI-2) which is secreted by bacteria and is used to communicate both the cell density and the metabolic potential of the environment. The regulation of gene expression in response to changes in cell density is called quorum sensing. Catalyzes the transformation of S-ribosylhomocysteine (RHC) to homocysteine (HC) and 4,5-dihydroxy-2,3-pentadione (DPD). The protein is S-ribosylhomocysteine lyase of Photorhabdus laumondii subsp. laumondii (strain DSM 15139 / CIP 105565 / TT01) (Photorhabdus luminescens subsp. laumondii).